The following is a 345-amino-acid chain: NADH-quinone oxidoreductase subunit H (345 aa).

A run of 8 helical transmembrane segments spans residues 13 to 33 (VLII…LLFL), 84 to 104 (FMLA…VIPF), 115 to 135 (VAIL…IMGG), 161 to 181 (IGLI…SAIV), 190 to 210 (FFSW…ISAL), 248 to 268 (YIAI…GWLS), 278 to 298 (IWMV…KAIV), and 309 to 329 (LGWK…AFAA).

This sequence belongs to the complex I subunit 1 family. NDH-1 is composed of 14 different subunits. Subunits NuoA, H, J, K, L, M, N constitute the membrane sector of the complex.

The protein resides in the cell inner membrane. It catalyses the reaction a quinone + NADH + 5 H(+)(in) = a quinol + NAD(+) + 4 H(+)(out). NDH-1 shuttles electrons from NADH, via FMN and iron-sulfur (Fe-S) centers, to quinones in the respiratory chain. The immediate electron acceptor for the enzyme in this species is believed to be ubiquinone. Couples the redox reaction to proton translocation (for every two electrons transferred, four hydrogen ions are translocated across the cytoplasmic membrane), and thus conserves the redox energy in a proton gradient. This subunit may bind ubiquinone. In Dinoroseobacter shibae (strain DSM 16493 / NCIMB 14021 / DFL 12), this protein is NADH-quinone oxidoreductase subunit H.